The sequence spans 196 residues: Ribonuclease HII (196 aa).

Residues I4–F196 form the RNase H type-2 domain. Residues D10, E11, and D106 each contribute to the a divalent metal cation site.

This sequence belongs to the RNase HII family. Requires Mn(2+) as cofactor. Mg(2+) is required as a cofactor.

Its subcellular location is the cytoplasm. The enzyme catalyses Endonucleolytic cleavage to 5'-phosphomonoester.. Endonuclease that specifically degrades the RNA of RNA-DNA hybrids. This chain is Ribonuclease HII, found in Polynucleobacter asymbioticus (strain DSM 18221 / CIP 109841 / QLW-P1DMWA-1) (Polynucleobacter necessarius subsp. asymbioticus).